We begin with the raw amino-acid sequence, 311 residues long: Probable flavin reductase (311 aa).

Residues 38 to 41 (TANS), 55 to 61 (CLAKSSR), 88 to 89 (FA), and Arg-95 contribute to the FMN site.

Belongs to the non-flavoprotein flavin reductase family.

This is Probable flavin reductase from Rhizobium meliloti (strain 1021) (Ensifer meliloti).